Consider the following 835-residue polypeptide: Transcription intermediary factor 1-beta (835 aa).

Residues 1-19 (MAASAAAASAAAASAASGS) show a composition bias toward low complexity. A disordered region spans residues 1 to 49 (MAASAAAASAAAASAASGSPGPGEGSAGGEKRSTAPSAAASASASAAAS). The residue at position 2 (A2) is an N-acetylalanine. 2 positions are modified to phosphoserine: S19 and S26. A Glycyl lysine isopeptide (Lys-Gly) (interchain with G-Cter in SUMO2) cross-link involves residue K31. Residues 35–49 (APSAAASASASAAAS) show a composition bias toward low complexity. Position 50 is a phosphoserine (S50). Residues 65–121 (CGVCRERLRPEREPRLLPCLHSACSACLGPAAPAAANSSGDGGAAGDGTVVDCPVCK) form an RING-type zinc finger. The segment at 65–376 (CGVCRERLRP…LIYFQLHRAL (312 aa)) is RBCC domain. Residue K127 forms a Glycyl lysine isopeptide (Lys-Gly) (interchain with G-Cter in SUMO2) linkage. Phosphoserine is present on S138. A B box-type 1; atypical zinc finger spans residues 148 to 195 (DANQCCTSCEDNAPATSYCVECSEPLCETCVEAHQRVKYTKDHTVRST). Zn(2+)-binding residues include C153, C156, C177, and H181. Residue K199 forms a Glycyl lysine isopeptide (Lys-Gly) (interchain with G-Cter in SUMO2) linkage. A B box-type 2 zinc finger spans residues 204-245 (ERTVYCNVHKHEPLVLFCESCDTLTCRDCQLNAHKDHQYQFL). Zn(2+) contacts are provided by C209, H212, C232, and H237. A leucine zipper alpha helical coiled-coil region region spans residues 246 to 376 (EDAVRNQRKL…LIYFQLHRAL (131 aa)). The tract at residues 247–376 (DAVRNQRKLL…LIYFQLHRAL (130 aa)) is interaction with MAGEC2. Residues K254 and K261 each participate in a glycyl lysine isopeptide (Lys-Gly) (interchain with G-Cter in SUMO2) cross-link. K266 carries the N6-acetyllysine modification. A Glycyl lysine isopeptide (Lys-Gly) (interchain with G-Cter in SUMO2) cross-link involves residue K272. N6-acetyllysine; alternate is present on K304. A Glycyl lysine isopeptide (Lys-Gly) (interchain with G-Cter in SUMO2); alternate cross-link involves residue K304. K319 participates in a covalent cross-link: Glycyl lysine isopeptide (Lys-Gly) (interchain with G-Cter in SUMO2). K340 carries the post-translational modification N6-acetyllysine. A Glycyl lysine isopeptide (Lys-Gly) (interchain with G-Cter in SUMO2) cross-link involves residue K366. The interval 366 to 370 (KLIYF) is involved in binding PPP1CA. The residue at position 377 (K377) is an N6-acetyllysine; alternate. K377 participates in a covalent cross-link: Glycyl lysine isopeptide (Lys-Gly) (interchain with G-Cter in SUMO2); alternate. A Glycyl lysine isopeptide (Lys-Gly) (interchain with G-Cter in SUMO1); alternate cross-link involves residue K377. A Glycyl lysine isopeptide (Lys-Gly) (interchain with G-Cter in SUMO2) cross-link involves residue K407. The tract at residues 411 to 480 (ERPGTNSTGP…SRSGEGEVSG (70 aa)) is disordered. Phosphoserine is present on S417. A Glycyl lysine isopeptide (Lys-Gly) (interchain with G-Cter in SUMO2) cross-link involves residue K434. Positions 434 to 443 (KQGSGSSQPM) are enriched in polar residues. Phosphoserine occurs at positions 437, 439, and 453. K469 participates in a covalent cross-link: Glycyl lysine isopeptide (Lys-Gly) (interchain with G-Cter in SUMO2); alternate. K469 is covalently cross-linked (Glycyl lysine isopeptide (Lys-Gly) (interchain with G-Cter in SUMO1); alternate). R470 is subject to Citrulline. Residue S471 is modified to Phosphoserine. R472 is subject to Citrulline. Residues S473, S479, and S489 each carry the phosphoserine modification. The HP1 box stretch occupies residues 476-513 (GEVSGLMRKVPRVSLERLDLDLTADSQPPVFKVFPGST). The PxVxL motif motif lies at 481–494 (LMRKVPRVSLERLD). T498 carries the phosphothreonine modification. Phosphoserine is present on S501. Residue K507 forms a Glycyl lysine isopeptide (Lys-Gly) (interchain with G-Cter in SUMO2) linkage. T541 carries the post-translational modification Phosphothreonine. A Glycyl lysine isopeptide (Lys-Gly) (interchain with G-Cter in SUMO2); alternate cross-link involves residue K554. K554 participates in a covalent cross-link: Glycyl lysine isopeptide (Lys-Gly) (interchain with G-Cter in SUMO); alternate. K575 participates in a covalent cross-link: Glycyl lysine isopeptide (Lys-Gly) (interchain with G-Cter in SUMO2). Residues 584–618 (GPGAEGPRLASPSGSTSSGLEVVAPEGTSAPGGGP) are disordered. A Phosphoserine modification is found at S594. The segment at 625 to 672 (ATICRVCQKPGDLVMCNQCEFCFHLDCHLPALQDVPGEEWSCSLCHVL) adopts a PHD-type zinc-finger fold. Residue K676 forms a Glycyl lysine isopeptide (Lys-Gly) (interchain with G-Cter in SUMO) linkage. A phosphoserine mark is found at S683, S689, and S697. The Bromo domain occupies 695-799 (KLSPANQRKC…RFFETRMNEA (105 aa)). K750 is covalently cross-linked (Glycyl lysine isopeptide (Lys-Gly) (interchain with G-Cter in SUMO2); alternate). K750 is covalently cross-linked (Glycyl lysine isopeptide (Lys-Gly) (interchain with G-Cter in SUMO1); alternate). A Glycyl lysine isopeptide (Lys-Gly) (interchain with G-Cter in SUMO); alternate cross-link involves residue K750. S752 is modified (phosphoserine). Y755 bears the Phosphotyrosine mark. S757 carries the phosphoserine modification. Residues K770, K774, and K779 each carry the N6-acetyllysine; alternate modification. Residues K770, K774, and K779 each participate in a glycyl lysine isopeptide (Lys-Gly) (interchain with G-Cter in SUMO2); alternate cross-link. Residue K779 forms a Glycyl lysine isopeptide (Lys-Gly) (interchain with G-Cter in SUMO1); alternate linkage. S784 bears the Phosphoserine mark. A Glycyl lysine isopeptide (Lys-Gly) (interchain with G-Cter in SUMO2); alternate cross-link involves residue K804. A Glycyl lysine isopeptide (Lys-Gly) (interchain with G-Cter in SUMO); alternate cross-link involves residue K804. The tract at residues 815–835 (MSLPGAGLSSQELSGGPGDGP) is disordered. The residue at position 824 (S824) is a Phosphoserine; by ATM and ATR and dsDNA kinase.

It belongs to the TRIM/RBCC family. In terms of assembly, interacts with SETX. Oligomer; the RBCC domain homotrimerizes and interacts with one molecule of KRAB to form the KRAB-KAP1 corepressor complex. Binding to a KRAB domain is an absolute requirement for silencing gene expression. Interacts with CEBPB and NR3C1. Interacts with a number of KRAB-ZFP proteins including ZNF10, ZFP53, ZFP68, ZNF382 and ZNF256. Interacts with NCOR1, NR3C1 and CHD3. Interacts with CEBPB (via the RING-type and PHD-type zinc fingers). Component of a ternary complex that includes TRIM28, a HP1 protein (CBX1, CBX3 OR CBX5), a KRAB domain-containing protein, and DNA. Interacts with CBX5 (via the PxVxL motif); the interaction occurs in interphase nuclei and competes for binding POGZ. Interacts with POGZ; the interaction competes for interaction with CBX5. Interacts with SETDB1; the interaction is enhanced by KAP1 sumoylation, stimulates SETDB1 histone methyltransferase activity and gene silencing. Interacts (via the PHD-type zinc finger) with UBE2I; the interaction is required for sumoylation and repressor activity. Component of the TRIM28/KAP1-ERBB4-MDM2 complex involved in connecting growth factor and DNA damage responses. Interacts directly with ERBB4; the interaction represses ERBB4-mediated transcription activity. Interacts with MDM2; the interaction contributes to p53/TP53 inactivation. Component of the TRIM28/KAP1-MDM2-p53/TP53; involved in regulating p53/TP53 stabilization and activity. Interacts (via the leucine zipper alpha helical coiled-coil) with E2F1 (central region); the interaction inhibits E2F1 acetylation and transcriptional activity. Interacts with PPP1CA; the interaction dephosphorylates TRIM28 at Ser-824 and forms a complex at the p21 promoter site. Interacts with PPP1CB; the interaction is weak but is increased on dephosphorylation at Ser-824. Interacts with FES/FPS. Interacts with SMARCAD1. Interacts with, and sumoylates IRF7. Interacts with MAGEC2. Part of a complex composed of TRIM28, HDAC1, HDAC2 and EHMT2. Interacts with AICDA. Interacts (via the RBCC domain) with KOX1 (via the KRAB domain), ZNF268 (via the KRAB domain) and ZNF300 (via the KRAB domain); the interactions increase KOX1, ZNF268 and ZNF300 nuclear localization activities. The large PER complex involved in the histone methylation is composed of at least PER2, CBX3, TRIM28, SUV39H1 and/or SUV39H2; CBX3 mediates the formation of the complex. Interacts with isoform 2 of ZFP90. Forms a complex with FOXP3 in the presence of isoform 2 of ZFP90. Interacts with NR4A3; the interactions potentiates NR4A3 activity on NurRE promoter. Interacts (unphosphorylated or phosphorylated form) with ZBTB1 (via BTB domain). Probably part of a corepressor complex containing ZNF304, TRIM28, SETDB1 and DNMT1. Interacts with ATRX. Forms a complex with ATRX, SETDB1 and ZNF274. Interacts with ZFP568; the interaction mediates ZFP568 transcriptional repression activity. Interacts with RRP1B. Interacts with CRY1. Interacts with ZNF263; recruited to the SIX3 promoter along with other proteins involved in chromatin modification and transcriptional corepression where it contributes to transcriptional repression. Interacts with CYREN (via XLF motif). Interacts with TRIM17; this interaction prevents TRIM28 activity. Interacts with ZNF746. Interacts with PHF13. Interacts with ZNF354C. Interacts with ZNF432; the interaction is independent of PARP1. As to quaternary structure, (Microbial infection) Interacts with herpes virus 8 protein LANA1; this interaction facilitates establishment of viral latency. In terms of processing, ATM-induced phosphorylation on Ser-824 represses sumoylation leading to the de-repression of expression of a subset of genes involved in cell cycle control and apoptosis in response to genotoxic stress. Dephosphorylation by the phosphatases, PPP1CA and PP1CB forms, allows sumoylation and expression of TRIM28 target genes. Sumoylation/desumoylation events regulate TRIM28-mediated transcriptional repression. Sumoylation is required for interaction with CHD3 and SETDB1 and the corepressor activity. Represses and is repressed by Ser-824 phosphorylation. Enhances the TRIM28 corepressor activity, inhibiting transcriptional activity of a number of genes including GADD45A and CDKN1A/p21. Lys-554, Lys-779 and Lys-804 are the major sites of sumoylation. In response to Dox-induced DNA damage, enhanced phosphorylation on Ser-824 prevents sumoylation and allows de-repression of CDKN1A/p21. Post-translationally, auto-ubiquitinated; enhanced by MAGEA2 and MAGEC2. In terms of processing, citrullinated by PADI4. ADP-ribosylated by SIRT6, promoting TRIM28/KAP1 interaction with CBX5, thereby contributing to the packaging of LINE-1 retrotransposon elements into transcriptionally repressive heterochromatin. As to expression, expressed in all tissues tested including spleen, thymus, prostate, testis, ovary, small intestine, colon and peripheral blood leukocytes.

It localises to the nucleus. The enzyme catalyses S-ubiquitinyl-[E2 ubiquitin-conjugating enzyme]-L-cysteine + [acceptor protein]-L-lysine = [E2 ubiquitin-conjugating enzyme]-L-cysteine + N(6)-ubiquitinyl-[acceptor protein]-L-lysine.. The protein operates within protein modification; protein sumoylation. Nuclear corepressor for KRAB domain-containing zinc finger proteins (KRAB-ZFPs). Mediates gene silencing by recruiting CHD3, a subunit of the nucleosome remodeling and deacetylation (NuRD) complex, and SETDB1 (which specifically methylates histone H3 at 'Lys-9' (H3K9me)) to the promoter regions of KRAB target genes. Enhances transcriptional repression by coordinating the increase in H3K9me, the decrease in histone H3 'Lys-9 and 'Lys-14' acetylation (H3K9ac and H3K14ac, respectively) and the disposition of HP1 proteins to silence gene expression. Recruitment of SETDB1 induces heterochromatinization. May play a role as a coactivator for CEBPB and NR3C1 in the transcriptional activation of ORM1. Also a corepressor for ERBB4. Inhibits E2F1 activity by stimulating E2F1-HDAC1 complex formation and inhibiting E2F1 acetylation. May serve as a partial backup to prevent E2F1-mediated apoptosis in the absence of RB1. Important regulator of CDKN1A/p21(CIP1). Has E3 SUMO-protein ligase activity toward itself via its PHD-type zinc finger. Also specifically sumoylates IRF7, thereby inhibiting its transactivation activity. Ubiquitinates p53/TP53 leading to its proteasomal degradation; the function is enhanced by MAGEC2 and MAGEA2, and possibly MAGEA3 and MAGEA6. Mediates the nuclear localization of KOX1, ZNF268 and ZNF300 transcription factors. In association with isoform 2 of ZFP90, is required for the transcriptional repressor activity of FOXP3 and the suppressive function of regulatory T-cells (Treg). Probably forms a corepressor complex required for activated KRAS-mediated promoter hypermethylation and transcriptional silencing of tumor suppressor genes (TSGs) or other tumor-related genes in colorectal cancer (CRC) cells. Required to maintain a transcriptionally repressive state of genes in undifferentiated embryonic stem cells (ESCs). In ESCs, in collaboration with SETDB1, is also required for H3K9me3 and silencing of endogenous and introduced retroviruses in a DNA-methylation independent-pathway. Associates at promoter regions of tumor suppressor genes (TSGs) leading to their gene silencing. The SETDB1-TRIM28-ZNF274 complex may play a role in recruiting ATRX to the 3'-exons of zinc-finger coding genes with atypical chromatin signatures to establish or maintain/protect H3K9me3 at these transcriptionally active regions. In terms of biological role, (Microbial infection) Plays a critical role in the shutdown of lytic gene expression during the early stage of herpes virus 8 primary infection. This inhibition is mediated through interaction with herpes virus 8 protein LANA1. This is Transcription intermediary factor 1-beta from Homo sapiens (Human).